Reading from the N-terminus, the 119-residue chain is UPF0145 protein Ta0182 (119 aa).

Belongs to the UPF0145 family.

The sequence is that of UPF0145 protein Ta0182 from Thermoplasma acidophilum (strain ATCC 25905 / DSM 1728 / JCM 9062 / NBRC 15155 / AMRC-C165).